A 458-amino-acid polypeptide reads, in one-letter code: Probable asparagine--tRNA ligase, cytoplasmic (458 aa).

The protein belongs to the class-II aminoacyl-tRNA synthetase family.

It is found in the cytoplasm. The catalysed reaction is tRNA(Asn) + L-asparagine + ATP = L-asparaginyl-tRNA(Asn) + AMP + diphosphate + H(+). This is Probable asparagine--tRNA ligase, cytoplasmic from Enterocytozoon bieneusi (strain H348) (Microsporidian parasite).